Reading from the N-terminus, the 195-residue chain is Glycine-rich protein A3 (195 aa).

Disordered stretches follow at residues 23 to 103 (AGGG…GVAG) and 159 to 182 (VMES…GSNL). Residues 47-77 (PAGGGYPPQGYPPAGGGYPPQGYPPAGGGYP) are compositionally biased toward gly residues. Residues 82 to 94 (PPAGHHSGSSAPH) are compositionally biased toward low complexity. The segment covering 163-175 (LSRESTGRARSTD) has biased composition (basic and acidic residues).

In Daucus carota (Wild carrot), this protein is Glycine-rich protein A3.